The sequence spans 344 residues: Meiotically up-regulated gene 10 protein (344 aa).

Residues Glu-48–Glu-207 enclose the DH domain.

Its subcellular location is the cytoplasm. It is found in the nucleus. Its function is as follows. Has a role in meiosis. The polypeptide is Meiotically up-regulated gene 10 protein (mug10) (Schizosaccharomyces pombe (strain 972 / ATCC 24843) (Fission yeast)).